A 140-amino-acid polypeptide reads, in one-letter code: PDZ domain-containing protein 11 (140 aa).

The region spanning 47 to 129 (IVTLKKPPGA…ISMRVRFFPY (83 aa)) is the PDZ domain.

In terms of assembly, interacts with ATP2B1, ATP2B2, ATP2B3, ATP2B4 and ATP7A. Interacts with PLEKHA7 (via WW domains) at zonula adherens; this interaction is essential for the interaction between PLEKHA7 and the ADAM10-binding protein TSPAN33. Interacts with SLC5A6.

The protein localises to the cytoplasm. It localises to the cell junction. The protein resides in the adherens junction. It is found in the cell membrane. Its function is as follows. Mediates docking of ADAM10 to zonula adherens by interacting with PLEKHA7 which is required for PLEKHA7 to interact with the ADAM10-binding protein TSPAN33. The polypeptide is PDZ domain-containing protein 11 (PDZD11) (Bos taurus (Bovine)).